The primary structure comprises 586 residues: A-type ATP synthase subunit A (586 aa).

238 to 245 (GPFGSGKT) is a binding site for ATP.

Belongs to the ATPase alpha/beta chains family. In terms of assembly, has multiple subunits with at least A(3), B(3), C, D, E, F, H, I and proteolipid K(x).

The protein resides in the cell membrane. The catalysed reaction is ATP + H2O + 4 H(+)(in) = ADP + phosphate + 5 H(+)(out). Its function is as follows. Component of the A-type ATP synthase that produces ATP from ADP in the presence of a proton gradient across the membrane. The A chain is the catalytic subunit. The protein is A-type ATP synthase subunit A of Haloferax volcanii (strain ATCC 29605 / DSM 3757 / JCM 8879 / NBRC 14742 / NCIMB 2012 / VKM B-1768 / DS2) (Halobacterium volcanii).